Consider the following 842-residue polypeptide: Pentatricopeptide repeat-containing protein At3g22690 (842 aa).

PPR repeat units follow at residues T98–P132, D133–K167, D168–S202, W203–P234, N235–V269, N270–S300, N301–P335, D336–S370, W371–K401, T402–S436, W437–Q463, D469–L503, D504–R534, D535–P569, D570–P605, and E606–E636. The type E motif stretch occupies residues I641–R716. Residues G717–S747 are type E(+) motif. The interval H748–W842 is type DYW motif.

The protein belongs to the PPR family. PCMP-H subfamily.

This chain is Pentatricopeptide repeat-containing protein At3g22690 (PCMP-H56), found in Arabidopsis thaliana (Mouse-ear cress).